The following is a 2376-amino-acid chain: Serine/threonine-protein kinase WNK1 (2376 aa).

2 disordered regions span residues 1 to 78 and 93 to 201; these read MSGG…EHRF and ELPG…QQDD. Composition is skewed to low complexity over residues 10-19 and 40-49; these read SSPPGSLFLS and GAAAADAGAG. Residues Ser-15 and Ser-19 each carry the phosphoserine modification. Basic and acidic residues predominate over residues 50-66; the sequence is RTEEYRRRRHTMDKDSR. Thr-60 carries the post-translational modification Phosphothreonine. The segment covering 125–158 has biased composition (low complexity); it reads TPAVAHVAQQPPAAATPGEPAAAVPAAASAPGSA. Position 172 is a phosphoserine (Ser-172). One can recognise a Protein kinase domain in the interval 219–477; it reads LKFDIEIGRG…IKDLLNHAFF (259 aa). Ser-229 contributes to the ATP binding site. 2 residues coordinate chloride: Phe-281 and Leu-297. ATP contacts are provided by residues 299–302 and Lys-349; that span reads TELM. Asp-366 (proton acceptor) is an active-site residue. Residues Leu-367 and Leu-369 each coordinate chloride. 2 positions are modified to phosphoserine; by autocatalysis: Ser-376 and Ser-380. An autoinhibitory domain region spans residues 486-553; that stretch reads ELAEEDDGEK…VCEGDHKTMA (68 aa). A compositionally biased stretch (basic and acidic residues) spans 571-586; that stretch reads QLVREEQEKRKQEESS. Disordered regions lie at residues 571 to 641, 701 to 799, and 1026 to 1118; these read QLVR…QLQY, AQPH…PVPT, and TTSS…SRPK. Low complexity-rich tracts occupy residues 587 to 601 and 614 to 624; these read LKQQGEQQSSASQAG and AAATTSASVST. The interval 627–637 is interaction with KLHL3; the sequence is EPEEPEADQHQ. Low complexity predominate over residues 708–752; sequence PPSSMAQGQSQGQPSSSSLTGIPSSQPVQHSQQQQGVQQTAPSQQ. Polar residues predominate over residues 753 to 766; it reads TVQYSLPQTSAPSE. The span at 1045-1057 shows a compositional bias: pro residues; that stretch reads PPEPVPAAPPQPT. The segment covering 1079–1089 has biased composition (polar residues); the sequence is SDGNENVPSSS. The span at 1097–1118 shows a compositional bias: basic residues; that stretch reads IKRHYRKSVRSRSRHEKTSRPK. The RFXV motif 1 signature appears at 1257–1260; it reads RFIV. Ser-1261 bears the Phosphoserine mark. 2 disordered regions span residues 1459 to 1478 and 1734 to 1770; these read STAAPGAKPPPVSSQQVSGS and STIPAVKPGTAPSKPPSTKPPVLPLGTELPAGTPPSE. Over residues 1746–1756 the composition is skewed to pro residues; that stretch reads SKPPSTKPPVL. An RFXV motif 2 motif is present at residues 1853-1856; sequence RFQV. The span at 1862–1878 shows a compositional bias: basic and acidic residues; the sequence is DTQKEGKNKSEDVKSVH. The disordered stretch occupies residues 1862-1942; that stretch reads DTQKEGKNKS…QPTKVGRFQV (81 aa). Residues 1881-1899 show a composition bias toward low complexity; it reads SSTSESSVLSSSSPESTLV. 2 consecutive short sequence motifs (RFXV motif) follow at residues 1939 to 1942 and 1951 to 1954; these read RFQV and RFSV. Phosphoserine occurs at positions 1972, 1996, 2005, 2006, 2021, 2023, and 2026. Disordered regions lie at residues 1991 to 2033 and 2110 to 2239; these read EKPE…LCSK and AAAP…RKGT. Basic residues predominate over residues 2116 to 2128; the sequence is GRRRRPTKSKGSK. Residues 2129–2141 are compositionally biased toward low complexity; sequence SSRSSSLGNKSPG. 2 stretches are compositionally biased toward polar residues: residues 2146–2161 and 2169–2193; these read LSGQSTATVLHPQQTL and ETGQNQLLQPLKPSPSSDNLYSAFT. Residues 2207-2223 show a composition bias toward low complexity; it reads GQGTSSTNTVGGTVSSQ. Positions 2224 to 2238 are enriched in polar residues; that stretch reads AAQAQPPTMTSSRKG. The segment at 2235–2255 is amphipathic alpha-helix; sequence SRKGTFTDDLHKLVDNWARDA. Phosphoserine is present on residues Ser-2264, Ser-2280, Ser-2364, and Ser-2366.

This sequence belongs to the protein kinase superfamily. Ser/Thr protein kinase family. WNK subfamily. As to quaternary structure, interacts with WNK3. Interacts with WNK4; inhibiting the activity of WNK4. Interacts with SGK1; promoting its activation. Associates with the mTORC2 complex. Interacts with UVRAG. Interacts (via amphipathic alpha-helix region) with EMC2; promoting the ER membrane protein complex assembly. Requires Mg(2+) as cofactor. In terms of processing, autophosphorylated at Ser-376 and Ser-380, promoting its activity. Autophosphorylation at Ser-380 is inhibited by intracellular calcium. Phosphorylation at Thr-60 increases ability to activate SGK1. Post-translationally, ubiquitinated by the BCR(KLHL3) complex, leading to its degradation. Also ubiquitinated by the BCR(KLHL2) complex.

It is found in the cytoplasm. The protein localises to the nucleus. Its subcellular location is the cytoskeleton. It localises to the spindle. It catalyses the reaction L-seryl-[protein] + ATP = O-phospho-L-seryl-[protein] + ADP + H(+). The catalysed reaction is L-threonyl-[protein] + ATP = O-phospho-L-threonyl-[protein] + ADP + H(+). Its activity is regulated as follows. Activated in response to hyperosmotic stress: cell shrinkage promotes formation of a membraneless compartment that concentrates WNK1 with its substrates, OXSR1/OSR1 and STK39/SPAK. Activation requires autophosphorylation of Ser-380 and, to a lower extent, Ser-376. Autophosphorylation and subsequent activation is inhibited by increases in intracellular ionic strength: Cl(-) potently inhibits WNK1 kinase activity via direct binding. Also inhibited by K(+) ions. Functionally, serine/threonine-protein kinase component of the WNK1-SPAK/OSR1 kinase cascade, which acts as a key regulator of blood pressure and regulatory volume increase by promoting ion influx. WNK1 mediates regulatory volume increase in response to hyperosmotic stress by acting as a molecular crowding sensor, which senses cell shrinkage and mediates formation of a membraneless compartment by undergoing liquid-liquid phase separation. The membraneless compartment concentrates WNK1 with its substrates, OXSR1/OSR1 and STK39/SPAK, promoting WNK1-dependent phosphorylation and activation of downstream kinases OXSR1/OSR1 and STK39/SPAK. Following activation, OXSR1/OSR1 and STK39/SPAK catalyze phosphorylation of ion cotransporters SLC12A1/NKCC2, SLC12A2/NKCC1, SLC12A5/KCC2 and SLC12A6/KCC3, regulating their activity. Phosphorylation of Na-K-Cl cotransporters SLC12A2/NKCC1 and SLC12A2/NKCC1 promote their activation and ion influx; simultaneously, phosphorylation of K-Cl cotransporters SLC12A5/KCC2 and SLC12A6/KCC3 inhibit their activity, blocking ion efflux. Also acts as a regulator of angiogenesis in endothelial cells via activation of OXSR1/OSR1 and STK39/SPAK: activation of OXSR1/OSR1 regulates chemotaxis and invasion, while STK39/SPAK regulates endothelial cell proliferation. Also acts independently of the WNK1-SPAK/OSR1 kinase cascade by catalyzing phosphorylation of other substrates, such as SYT2, PCF11 and NEDD4L. Mediates phosphorylation of SYT2, regulating SYT2 association with phospholipids and membrane-binding. Regulates mRNA export in the nucleus by mediating phosphorylation of PCF11, thereby decreasing the association between PCF11 and POLR2A/RNA polymerase II and promoting mRNA export to the cytoplasm. Acts as a negative regulator of autophagy. Required for the abscission step during mitosis, independently of the WNK1-SPAK/OSR1 kinase cascade. May also play a role in actin cytoskeletal reorganization. Also acts as a scaffold protein independently of its protein kinase activity: negatively regulates cell membrane localization of various transporters and channels, such as SLC4A4, SLC26A6, SLC26A9, TRPV4 and CFTR. Involved in the regulation of epithelial Na(+) channel (ENaC) by promoting activation of SGK1 in a kinase-independent manner: probably acts as a scaffold protein that promotes the recruitment of SGK1 to the mTORC2 complex in response to chloride, leading to mTORC2-dependent phosphorylation and activation of SGK1. Acts as an assembly factor for the ER membrane protein complex independently of its protein kinase activity: associates with EMC2 in the cytoplasm via its amphipathic alpha-helix, and prevents EMC2 ubiquitination and subsequent degradation, thereby promoting EMC2 stabilization. This Sus scrofa (Pig) protein is Serine/threonine-protein kinase WNK1.